The sequence spans 556 residues: Urease subunit alpha 1 (556 aa).

A Urease domain is found at 127–556 (GAVDTHVHLL…SVSLNRLYFL (430 aa)). Ni(2+) contacts are provided by His132, His134, and Lys212. Residue Lys212 is modified to N6-carboxylysine. His214 contributes to the substrate binding site. His241 and His267 together coordinate Ni(2+). The active-site Proton donor is the His315. Asp355 serves as a coordination point for Ni(2+).

Belongs to the metallo-dependent hydrolases superfamily. Urease alpha subunit family. May form a heterohexamer of 3 UreC (alpha) and 3 UreAB (gamma/beta) subunits. May also form a heterotrimer of UreA (gamma), UreB (beta) and UreC (alpha) subunits. Three heterotrimers associate to form the active enzyme. The cofactor is Ni cation. Carboxylation allows a single lysine to coordinate two nickel ions.

Its subcellular location is the cytoplasm. The enzyme catalyses urea + 2 H2O + H(+) = hydrogencarbonate + 2 NH4(+). Its pathway is nitrogen metabolism; urea degradation; CO(2) and NH(3) from urea (urease route): step 1/1. This Streptomyces avermitilis (strain ATCC 31267 / DSM 46492 / JCM 5070 / NBRC 14893 / NCIMB 12804 / NRRL 8165 / MA-4680) protein is Urease subunit alpha 1.